Reading from the N-terminus, the 142-residue chain is Large ribosomal subunit protein uL13 (142 aa).

Belongs to the universal ribosomal protein uL13 family. As to quaternary structure, part of the 50S ribosomal subunit.

Functionally, this protein is one of the early assembly proteins of the 50S ribosomal subunit, although it is not seen to bind rRNA by itself. It is important during the early stages of 50S assembly. The chain is Large ribosomal subunit protein uL13 from Koribacter versatilis (strain Ellin345).